Here is a 346-residue protein sequence, read N- to C-terminus: UDP-3-O-acylglucosamine N-acyltransferase (346 aa).

His240 functions as the Proton acceptor in the catalytic mechanism.

The protein belongs to the transferase hexapeptide repeat family. LpxD subfamily. Homotrimer.

It carries out the reaction a UDP-3-O-[(3R)-3-hydroxyacyl]-alpha-D-glucosamine + a (3R)-hydroxyacyl-[ACP] = a UDP-2-N,3-O-bis[(3R)-3-hydroxyacyl]-alpha-D-glucosamine + holo-[ACP] + H(+). The protein operates within bacterial outer membrane biogenesis; LPS lipid A biosynthesis. In terms of biological role, catalyzes the N-acylation of UDP-3-O-acylglucosamine using 3-hydroxyacyl-ACP as the acyl donor. Is involved in the biosynthesis of lipid A, a phosphorylated glycolipid that anchors the lipopolysaccharide to the outer membrane of the cell. This chain is UDP-3-O-acylglucosamine N-acyltransferase, found in Bacteroides fragilis (strain YCH46).